A 947-amino-acid chain; its full sequence is Mitogen-activated protein kinase kinase kinase 14 (947 aa).

2 disordered regions span residues 1 to 37 (MAVMEMACPGAPGSAVGQQKELPKAKEKTPPLGKKQS) and 135 to 171 (KGKRRSKARKKRKKKSSKSLAHAGVALAKPLPRTPEQ). Positions 135 to 151 (KGKRRSKARKKRKKKSS) are enriched in basic residues. The Protein kinase domain occupies 400 to 655 (ATHQLRLGRG…ELGGKVNRAL (256 aa)). The tract at residues 401-653 (THQLRLGRGS…AAELGGKVNR (253 aa)) is interaction with ZFP91. Residues 406 to 414 (LGRGSFGEV) and K429 contribute to the ATP site. The active-site Proton acceptor is the D515. T559 bears the Phosphothreonine mark. Disordered regions lie at residues 662–766 (KSPW…ATVP) and 805–830 (LSDDSEKNPSKASQSSRDTLSSGVHS). Positions 665–674 (WRGEYKEPRH) are enriched in basic and acidic residues. Over residues 713 to 727 (LQPPLPPEPPEPNKS) the composition is skewed to pro residues. Low complexity predominate over residues 741–752 (EPLPLSSLEPAP). Residues 814–829 (SKASQSSRDTLSSGVH) show a composition bias toward polar residues.

It belongs to the protein kinase superfamily. STE Ser/Thr protein kinase family. MAP kinase kinase kinase subfamily. In terms of assembly, interacts with TRAF2, TRAF5, TRAF6, IKKA and NFKB2/P100. Interacts with TRAF3 and PELI3. Interacts with NIBP; the interaction is direct. Interacts with ARRB1 and ARRB2. Interacts with GRB10. Interacts with ZFP91. Interacts with NLRP12; this interaction promotes proteasomal degradation of MAP3K14. Directly interacts with DDX3X. Interacts (via C-terminus and kinase domain) with PPPC3A (via N-terminus) and PPP3CB. Autophosphorylated. Phosphorylation at Thr-559 is required to activate its kinase activity and 'Lys-63'-linked polyubiquitination. Phosphorylated by CHUK/IKKA leading to MAP3K14 destabilization. Post-translationally, ubiquitinated. Undergoes both 'Lys-48'- and 'Lys-63'-linked polyubiquitination. 'Lys-48'-linked polyubiquitination leads to its degradation by the proteasome, while 'Lys-63'-linked polyubiquitination stabilizes and activates it. In terms of tissue distribution, weakly expressed in testis, small intestine, spleen, thymus, peripheral blood leukocytes, prostate, ovary and colon.

It is found in the cytoplasm. The catalysed reaction is L-seryl-[protein] + ATP = O-phospho-L-seryl-[protein] + ADP + H(+). It carries out the reaction L-threonyl-[protein] + ATP = O-phospho-L-threonyl-[protein] + ADP + H(+). Lymphotoxin beta-activated kinase which seems to be exclusively involved in the activation of NF-kappa-B and its transcriptional activity. Phosphorylates CHUK/IKKA, thereby promoting proteolytic processing of NFKB2/P100, which leads to NF-kappa-B activation via the non-canonical pathway. Has an essential role in the non-canonical NF-kappa-B signaling that regulates genes encoding molecules involved in B-cell survival, lymphoid organogenesis, and immune response. Could act in a receptor-selective manner. The chain is Mitogen-activated protein kinase kinase kinase 14 from Homo sapiens (Human).